Here is a 360-residue protein sequence, read N- to C-terminus: Phospho-N-acetylmuramoyl-pentapeptide-transferase (360 aa).

A run of 10 helical transmembrane segments spans residues 21–41 (YLTL…ILIG), 73–93 (TMGG…WADL), 97–117 (YVLV…VDDY), 134–154 (YFWQ…SATM), 168–188 (VFPQ…VGTS), 199–219 (GLAI…AYVT), 239–259 (LVIV…FNTY), 263–283 (VFMG…LAVL), 288–308 (LVLI…ILQV), and 338–358 (VIVR…ATLK).

It belongs to the glycosyltransferase 4 family. MraY subfamily. It depends on Mg(2+) as a cofactor.

The protein resides in the cell inner membrane. The catalysed reaction is UDP-N-acetyl-alpha-D-muramoyl-L-alanyl-gamma-D-glutamyl-meso-2,6-diaminopimeloyl-D-alanyl-D-alanine + di-trans,octa-cis-undecaprenyl phosphate = di-trans,octa-cis-undecaprenyl diphospho-N-acetyl-alpha-D-muramoyl-L-alanyl-D-glutamyl-meso-2,6-diaminopimeloyl-D-alanyl-D-alanine + UMP. Its pathway is cell wall biogenesis; peptidoglycan biosynthesis. Functionally, catalyzes the initial step of the lipid cycle reactions in the biosynthesis of the cell wall peptidoglycan: transfers peptidoglycan precursor phospho-MurNAc-pentapeptide from UDP-MurNAc-pentapeptide onto the lipid carrier undecaprenyl phosphate, yielding undecaprenyl-pyrophosphoryl-MurNAc-pentapeptide, known as lipid I. This is Phospho-N-acetylmuramoyl-pentapeptide-transferase from Alteromonas mediterranea (strain DSM 17117 / CIP 110805 / LMG 28347 / Deep ecotype).